A 165-amino-acid polypeptide reads, in one-letter code: Large ribosomal subunit protein uL10 (165 aa).

The protein belongs to the universal ribosomal protein uL10 family. As to quaternary structure, part of the ribosomal stalk of the 50S ribosomal subunit. The N-terminus interacts with L11 and the large rRNA to form the base of the stalk. The C-terminus forms an elongated spine to which L12 dimers bind in a sequential fashion forming a multimeric L10(L12)X complex.

Functionally, forms part of the ribosomal stalk, playing a central role in the interaction of the ribosome with GTP-bound translation factors. This is Large ribosomal subunit protein uL10 from Shewanella pealeana (strain ATCC 700345 / ANG-SQ1).